The following is a 341-amino-acid chain: Phenylalanine--tRNA ligase alpha subunit (341 aa).

Residue Glu-256 participates in Mg(2+) binding.

It belongs to the class-II aminoacyl-tRNA synthetase family. Phe-tRNA synthetase alpha subunit type 1 subfamily. As to quaternary structure, tetramer of two alpha and two beta subunits. Requires Mg(2+) as cofactor.

It is found in the cytoplasm. It carries out the reaction tRNA(Phe) + L-phenylalanine + ATP = L-phenylalanyl-tRNA(Phe) + AMP + diphosphate + H(+). The sequence is that of Phenylalanine--tRNA ligase alpha subunit from Chlamydia felis (strain Fe/C-56) (Chlamydophila felis).